A 109-amino-acid polypeptide reads, in one-letter code: Putative double-stranded DNA mimic protein Ent638_2296 (109 aa).

It belongs to the putative dsDNA mimic protein family.

Functionally, may act as a double-stranded DNA (dsDNA) mimic. Probably regulates the activity of a dsDNA-binding protein. This is Putative double-stranded DNA mimic protein Ent638_2296 from Enterobacter sp. (strain 638).